A 159-amino-acid chain; its full sequence is Putative pre-16S rRNA nuclease (159 aa).

The protein belongs to the YqgF nuclease family.

It localises to the cytoplasm. Its function is as follows. Could be a nuclease involved in processing of the 5'-end of pre-16S rRNA. The polypeptide is Putative pre-16S rRNA nuclease (Synechococcus sp. (strain JA-3-3Ab) (Cyanobacteria bacterium Yellowstone A-Prime)).